The chain runs to 444 residues: MATIKSIKARQIFDSRGNPTVEVDVHISNGVFARAAVPSGASTGIYEALELRDGGSDYLGKGVSKAVNNVNSIIGPALVGKDPTDQTGLDNFMVHQLDGTQNEWGWCKEKLGANAILAVSLAVCKAGAAVRNVPLYKHIADLAGNKKLVLPVPAFNVINGGSHAGNKLAMQEFMILPVGAANFKEAMKMGCEVYHHLKAVIKKKYGQDATNVGDEGGFAPNIQENKEGLELLKTAIEKAGYTGKVVIGMDVAASEFYGKDKSYDLNFKEESNDGSQKISGDQLKDLYKSFVSEYPIVSIEDPFDQDDWETYAKLTAEIGEQVQIVGDDLLVTNPKRVAKAIAEKTCNALLLKVNQIGSVTESIEAVKMSKKAGWGVMTSHRSGETEDTFIADLAVGLSTGQIKTGAPCRSERLAKYNQLLRIEEELGSEAVYAGASFRKPVEPY.

The substrate site is built by H163 and E172. E215 serves as the catalytic Proton donor. Residues D250, E300, and D327 each contribute to the Mg(2+) site. 2 residues coordinate substrate: E300 and D327. The active-site Proton acceptor is the K352. Substrate is bound by residues S379–S382 and K403.

Belongs to the enolase family. In terms of assembly, homodimer. The cofactor is Mg(2+).

The protein localises to the cytoplasm. It catalyses the reaction (2R)-2-phosphoglycerate = phosphoenolpyruvate + H2O. Its pathway is carbohydrate degradation; glycolysis; pyruvate from D-glyceraldehyde 3-phosphate: step 4/5. The protein is Enolase (PGH1) of Solanum lycopersicum (Tomato).